Reading from the N-terminus, the 473-residue chain is Serine palmitoyltransferase 1 (473 aa).

The Lumenal segment spans residues 1-15; that stretch reads MATVAEQWVLVEMVQ. An interaction with SPTLC2 region spans residues 1–66; that stretch reads MATVAEQWVL…KEELIEEWQP (66 aa). Residues 16–36 form a helical membrane-spanning segment; that stretch reads ALYEAPAYHLILEGILILWII. Topologically, residues 37–473 are cytoplasmic; sequence RLVFSKTYKL…IREAAQAVLL (437 aa). Tyr-164 is modified (phosphotyrosine; by ABL).

Belongs to the class-II pyridoxal-phosphate-dependent aminotransferase family. In terms of assembly, component of the serine palmitoyltransferase (SPT) complex, which is also composed of SPTLC2 or SPTLC3 and SPTSSA or SPTSSB. The heterodimer with SPTLC2 or SPTLC3 forms the catalytic core of the enzyme, while SPTSSA or SPTSSB subunits determine substrate specificity. SPT also interacts with ORMDL proteins, especially ORMDL3, which negatively regulate SPT activity in the presence of ceramides. Forms dimers of heterodimers with SPTLC2. Interacts with RTN4 (isoform B). It depends on pyridoxal 5'-phosphate as a cofactor. In terms of processing, phosphorylation at Tyr-164 inhibits activity and promotes cell survival. In terms of tissue distribution, expressed in a variety of tissues. Highest expression in brain, kidney and liver. Expressed in brown and white adipose tissues.

It localises to the endoplasmic reticulum membrane. The catalysed reaction is L-serine + hexadecanoyl-CoA + H(+) = 3-oxosphinganine + CO2 + CoA. It carries out the reaction octadecanoyl-CoA + L-serine + H(+) = 3-oxoeicosasphinganine + CO2 + CoA. The enzyme catalyses tetradecanoyl-CoA + L-serine + H(+) = 3-oxohexadecasphinganine + CO2 + CoA. It catalyses the reaction dodecanoyl-CoA + L-serine + H(+) = 3-oxotetradecasphinganine + CO2 + CoA. It participates in lipid metabolism; sphingolipid metabolism. With respect to regulation, SPT complex catalytic activity is negatively regulated by ORMDL proteins, including ORMDL3, in the presence of ceramides. This mechanism allows to maintain ceramide levels at sufficient concentrations for the production of complex sphingolipids, but which prevents the accumulation of ceramides to levels that trigger apoptosis. In terms of biological role, component of the serine palmitoyltransferase multisubunit enzyme (SPT) that catalyzes the initial and rate-limiting step in sphingolipid biosynthesis by condensing L-serine and activated acyl-CoA (most commonly palmitoyl-CoA) to form long-chain bases. The SPT complex is also composed of SPTLC2 or SPTLC3 and SPTSSA or SPTSSB. Within this complex, the heterodimer with SPTLC2 or SPTLC3 forms the catalytic core. The composition of the serine palmitoyltransferase (SPT) complex determines the substrate preference. The SPTLC1-SPTLC2-SPTSSA complex shows a strong preference for C16-CoA substrate, while the SPTLC1-SPTLC3-SPTSSA isozyme uses both C14-CoA and C16-CoA as substrates, with a slight preference for C14-CoA. The SPTLC1-SPTLC2-SPTSSB complex shows a strong preference for C18-CoA substrate, while the SPTLC1-SPTLC3-SPTSSB isozyme displays an ability to use a broader range of acyl-CoAs, without apparent preference. Required for adipocyte cell viability and metabolic homeostasis. The polypeptide is Serine palmitoyltransferase 1 (Sptlc1) (Mus musculus (Mouse)).